We begin with the raw amino-acid sequence, 174 residues long: Large ribosomal subunit protein uL10 (174 aa).

The protein belongs to the universal ribosomal protein uL10 family. In terms of assembly, part of the ribosomal stalk of the 50S ribosomal subunit. The N-terminus interacts with L11 and the large rRNA to form the base of the stalk. The C-terminus forms an elongated spine to which L12 dimers bind in a sequential fashion forming a multimeric L10(L12)X complex.

Forms part of the ribosomal stalk, playing a central role in the interaction of the ribosome with GTP-bound translation factors. The sequence is that of Large ribosomal subunit protein uL10 from Methylobacillus flagellatus (strain ATCC 51484 / DSM 6875 / VKM B-1610 / KT).